The primary structure comprises 113 residues: UPF0102 protein Mfla_2283 (113 aa).

It belongs to the UPF0102 family.

The protein is UPF0102 protein Mfla_2283 of Methylobacillus flagellatus (strain ATCC 51484 / DSM 6875 / VKM B-1610 / KT).